Reading from the N-terminus, the 391-residue chain is Ectodysplasin-A (391 aa).

The span at methionine 1–glycine 21 shows a compositional bias: basic and acidic residues. The interval methionine 1–arginine 28 is disordered. Over methionine 1 to arginine 41 the chain is Cytoplasmic. Residues leucine 42–leucine 62 form a helical; Signal-anchor for type II membrane protein membrane-spanning segment. The Extracellular portion of the chain corresponds to glutamate 63–serine 391. Disordered regions lie at residues glycine 73–glycine 130 and serine 145–glutamate 245. Residues serine 76–leucine 96 show a composition bias toward low complexity. The region spanning glycine 180–proline 229 is the Collagen-like domain. Pro residues-rich tracts occupy residues proline 181–proline 203 and proline 216–proline 228. The region spanning alanine 249 to leucine 385 is the THD domain. Residue asparagine 313 is glycosylated (N-linked (GlcNAc...) asparagine). Cysteine 332 and cysteine 346 are joined by a disulfide. Asparagine 372 carries an N-linked (GlcNAc...) asparagine glycan.

This sequence belongs to the tumor necrosis factor family. In terms of assembly, homotrimer. The homotrimers may then dimerize and form higher-order oligomers. Post-translationally, N-glycosylated. In terms of processing, processing by furin produces a secreted form.

The protein resides in the cell membrane. The protein localises to the secreted. In terms of biological role, cytokine which is involved in epithelial-mesenchymal signaling during morphogenesis of ectodermal organs. Functions as a ligand activating the DEATH-domain containing receptors EDAR and EDA2R. Isoform A1 binds only to the receptor EDAR, while isoform A2 binds exclusively to the receptor EDA2R. May also play a role in cell adhesion. Isoform A1 binds only to the receptor EDAR, while isoform A2 binds exclusively to the receptor EDA2R. Functionally, isoform A2 binds exclusively to the receptor EDA2R. The sequence is that of Ectodysplasin-A (EDA) from Bos taurus (Bovine).